Here is a 1199-residue protein sequence, read N- to C-terminus: Transcription initiation factor TFIID subunit 2 (1199 aa).

3 disordered regions span residues methionine 1–proline 23, arginine 1067–glutamine 1102, and lysine 1136–aspartate 1199. Residues cysteine 1093–glutamine 1102 show a composition bias toward polar residues. Basic residues predominate over residues serine 1144 to histidine 1171. Residues threonine 1182–aspartate 1199 show a composition bias toward polar residues. Serine 1185, serine 1188, serine 1194, serine 1196, and serine 1198 each carry phosphoserine.

The protein belongs to the TAF2 family. In terms of assembly, component of the TFIID basal transcription factor complex, composed of TATA-box-binding protein TBP, and a number of TBP-associated factors (TAFs), including TAF1, TAF2, TAF3, TAF4, TAF5, TAF6, TAF7, TAF8, TAF9, TAF10, TAF11, TAF12 and TAF13. Interacts with TAF2C1. Component of the TFTC-HAT complex. Expressed in all tissues tested.

It localises to the nucleus. Its function is as follows. The TFIID basal transcription factor complex plays a major role in the initiation of RNA polymerase II (Pol II)-dependent transcription. TFIID recognizes and binds promoters with or without a TATA box via its subunit TBP, a TATA-box-binding protein, and promotes assembly of the pre-initiation complex (PIC). The TFIID complex consists of TBP and TBP-associated factors (TAFs), including TAF1, TAF2, TAF3, TAF4, TAF5, TAF6, TAF7, TAF8, TAF9, TAF10, TAF11, TAF12 and TAF13. TAF2 forms a promoter DNA binding subcomplex of TFIID, together with TAF7 and TAF1. This Homo sapiens (Human) protein is Transcription initiation factor TFIID subunit 2 (TAF2).